Consider the following 273-residue polypeptide: Ribosomal RNA small subunit methyltransferase I (273 aa).

This sequence belongs to the methyltransferase superfamily. RsmI family.

It is found in the cytoplasm. It catalyses the reaction cytidine(1402) in 16S rRNA + S-adenosyl-L-methionine = 2'-O-methylcytidine(1402) in 16S rRNA + S-adenosyl-L-homocysteine + H(+). In terms of biological role, catalyzes the 2'-O-methylation of the ribose of cytidine 1402 (C1402) in 16S rRNA. The chain is Ribosomal RNA small subunit methyltransferase I from Xylella fastidiosa (strain 9a5c).